The following is a 389-amino-acid chain: Galactokinase (389 aa).

34–37 (EHTD) is a binding site for substrate. ATP-binding positions include serine 68 and 125–131 (GSGLSSS). Mg(2+)-binding residues include serine 131 and glutamate 163. Aspartate 175 acts as the Proton acceptor in catalysis. Tyrosine 225 lines the substrate pocket.

Belongs to the GHMP kinase family. GalK subfamily.

It is found in the cytoplasm. It carries out the reaction alpha-D-galactose + ATP = alpha-D-galactose 1-phosphate + ADP + H(+). Its pathway is carbohydrate metabolism; galactose metabolism. Functionally, catalyzes the transfer of the gamma-phosphate of ATP to D-galactose to form alpha-D-galactose-1-phosphate (Gal-1-P). This Clostridium acetobutylicum (strain ATCC 824 / DSM 792 / JCM 1419 / IAM 19013 / LMG 5710 / NBRC 13948 / NRRL B-527 / VKM B-1787 / 2291 / W) protein is Galactokinase.